Reading from the N-terminus, the 271-residue chain is Shikimate dehydrogenase (NADP(+)) (271 aa).

Shikimate is bound by residues 14–16 (SRS) and Thr-61. The Proton acceptor role is filled by Lys-65. The shikimate site is built by Asn-86 and Asp-102. NADP(+) is bound by residues 126-130 (GAGGA), 149-154 (NRTFSR), and Met-213. Tyr-215 contacts shikimate. An NADP(+)-binding site is contributed by Gly-238.

The protein belongs to the shikimate dehydrogenase family. Homodimer.

The catalysed reaction is shikimate + NADP(+) = 3-dehydroshikimate + NADPH + H(+). The protein operates within metabolic intermediate biosynthesis; chorismate biosynthesis; chorismate from D-erythrose 4-phosphate and phosphoenolpyruvate: step 4/7. Functionally, involved in the biosynthesis of the chorismate, which leads to the biosynthesis of aromatic amino acids. Catalyzes the reversible NADPH linked reduction of 3-dehydroshikimate (DHSA) to yield shikimate (SA). The sequence is that of Shikimate dehydrogenase (NADP(+)) from Histophilus somni (strain 129Pt) (Haemophilus somnus).